The primary structure comprises 108 residues: UPF0060 membrane protein SH0717 (108 aa).

The next 4 helical transmembrane spans lie at 5–25 (IFIFLLAGLCEIGGGYLIWLW), 31–51 (SSWLGFIGGVILMMYGVIATF), 60–80 (VYAAYGGVFIVMSLIWAYIVD), and 86–106 (KYDLIGACICIIGVCVMILPS).

It belongs to the UPF0060 family.

The protein resides in the cell membrane. The sequence is that of UPF0060 membrane protein SH0717 from Staphylococcus haemolyticus (strain JCSC1435).